The sequence spans 113 residues: N(2)-fixation sustaining protein CowN (113 aa).

The protein belongs to the CowN family.

In terms of biological role, is required to sustain N(2)-dependent growth in the presence of low levels of carbon monoxide (CO). Probably acts by protecting the N(2) fixation ability of the nitrogenase complex, which is inactivated in the presence of CO. This chain is N(2)-fixation sustaining protein CowN, found in Wolinella succinogenes (strain ATCC 29543 / DSM 1740 / CCUG 13145 / JCM 31913 / LMG 7466 / NCTC 11488 / FDC 602W) (Vibrio succinogenes).